We begin with the raw amino-acid sequence, 117 residues long: NADH-quinone oxidoreductase subunit A (117 aa).

The next 3 helical transmembrane spans lie at 4-24 (WIGV…GMLT), 64-84 (LMFV…VSFV), and 86-106 (LGLA…LGLW).

Belongs to the complex I subunit 3 family. In terms of assembly, NDH-1 is composed of 14 different subunits. Subunits NuoA, H, J, K, L, M, N constitute the membrane sector of the complex.

The protein resides in the cell membrane. It carries out the reaction a quinone + NADH + 5 H(+)(in) = a quinol + NAD(+) + 4 H(+)(out). Functionally, NDH-1 shuttles electrons from NADH, via FMN and iron-sulfur (Fe-S) centers, to quinones in the respiratory chain. The immediate electron acceptor for the enzyme in this species is believed to be a menaquinone. Couples the redox reaction to proton translocation (for every two electrons transferred, four hydrogen ions are translocated across the cytoplasmic membrane), and thus conserves the redox energy in a proton gradient. The sequence is that of NADH-quinone oxidoreductase subunit A from Desulforamulus reducens (strain ATCC BAA-1160 / DSM 100696 / MI-1) (Desulfotomaculum reducens).